Reading from the N-terminus, the 197-residue chain is Phosphoheptose isomerase (197 aa).

The 162-residue stretch at 36 to 197 folds into the SIS domain; that stretch reads MVNALLNEGK…IDSQLFGSEE (162 aa). 51-53 contributes to the substrate binding site; the sequence is NGG. Residues His-60 and Glu-64 each contribute to the Zn(2+) site. Residues Glu-64, 93–94, 119–121, Ser-124, and Gln-174 each bind substrate; these read ND and STS. Positions 174 and 182 each coordinate Zn(2+).

Belongs to the SIS family. GmhA subfamily. As to quaternary structure, homotetramer. Zn(2+) serves as cofactor.

The protein localises to the cytoplasm. The catalysed reaction is 2 D-sedoheptulose 7-phosphate = D-glycero-alpha-D-manno-heptose 7-phosphate + D-glycero-beta-D-manno-heptose 7-phosphate. The protein operates within carbohydrate biosynthesis; D-glycero-D-manno-heptose 7-phosphate biosynthesis; D-glycero-alpha-D-manno-heptose 7-phosphate and D-glycero-beta-D-manno-heptose 7-phosphate from sedoheptulose 7-phosphate: step 1/1. Functionally, catalyzes the isomerization of sedoheptulose 7-phosphate in D-glycero-D-manno-heptose 7-phosphate. This chain is Phosphoheptose isomerase, found in Pseudomonas fluorescens (strain SBW25).